Here is a 222-residue protein sequence, read N- to C-terminus: Fibrillarin-like rRNA/tRNA 2'-O-methyltransferase (222 aa).

S-adenosyl-L-methionine-binding positions include 86-87, 104-105, 129-130, and 149-152; these read TT, EV, DA, and DISQ.

This sequence belongs to the methyltransferase superfamily. Fibrillarin family. Interacts with nop5. Component of box C/D small ribonucleoprotein (sRNP) particles that contain rpl7ae, FlpA and nop5, plus a guide RNA.

Its function is as follows. Involved in pre-rRNA and tRNA processing. Utilizes the methyl donor S-adenosyl-L-methionine to catalyze the site-specific 2'-hydroxyl methylation of ribose moieties in rRNA and tRNA. Site specificity is provided by a guide RNA that base pairs with the substrate. Methylation occurs at a characteristic distance from the sequence involved in base pairing with the guide RNA. This is Fibrillarin-like rRNA/tRNA 2'-O-methyltransferase from Thermoplasma volcanium (strain ATCC 51530 / DSM 4299 / JCM 9571 / NBRC 15438 / GSS1).